The chain runs to 131 residues: Small ribosomal subunit protein bS6 (131 aa).

Residues 98 to 131 (EASPMVKAKDERRERRDDFANETADDAEAGDSEE) are disordered. Residues 104–116 (KAKDERRERRDDF) show a composition bias toward basic and acidic residues. Positions 120–131 (TADDAEAGDSEE) are enriched in acidic residues.

This sequence belongs to the bacterial ribosomal protein bS6 family.

Functionally, binds together with bS18 to 16S ribosomal RNA. This is Small ribosomal subunit protein bS6 from Salmonella dublin (strain CT_02021853).